The chain runs to 800 residues: MSRRRAHDTEDEGYDHRRNKRRRVSENQEIEDRLESLILRVGERSTSSVESNLEGLVSVLEADLGTFRLKILRILSDCAVRMPEKCTVYTTLVGLLNAKNYKFGGEFVDHMVKTFKESLKLCRWDAARYSLRFLADLVNCHVISATSLLQLLDTMIDVSNEDTVPQVRRDWFVFAVLSTLPWVGRDLYEKKESALESLLLRIEVYLNKRSKKHHNALRVWSSDAPHPQEEYLDCLWAQIRKLRQDNWAEKHIPRPYLVFDSILCEALQHNLPAIVPPPHHDNFEYPMPWVVYRMFDYTDCPDGPNLPGAHSIERFLIEEHLHHIIETYHHERKDCAAQLLSFPFKHKIPLEYCIVEVIFAELFHMPTPRYLDICYGSILIELCKLQPATLPQVLAQATEILFMRIDSMNTSCFDRFVNWFSYHLSNFKFTWSWDEWDSCLLLDGEHPRPKFIQEVLQKCLRLSYHQRITEMMPTTYAKLIPLTPVPNYKYANEEAANLPGTTVAHQLVVAIRQKCTPEEVVNILKDIPSSGYSGEEMSDGSFNALKIDVFVQTLLNLGSKSFSHSFAAISKFHSVFRALAETEEAQICILHNIYELWSSHQQMMVVLIDKLLKLQIVDCSAVATWIFSKEMTGEFTKMYLWEILHLTIKKMNKHVIKLNSELSEAKDKLAKADSSSSDSEDDSSHKRKKPITHADKPSEEVVERMEEKLEAANVNQKRLFLIVFQRFIMILSEHLLRSDTDGRDPDTDWYRWTIGRLQQVFLMHHEQVQKYSSTLETLLFTSDLDTHILEVFQQFVALRA.

The interval 1–26 (MSRRRAHDTEDEGYDHRRNKRRRVSE) is disordered. Position 9 is a phosphothreonine (Thr-9). In terms of domain architecture, MIF4G spans 31–243 (EDRLESLILR…CLWAQIRKLR (213 aa)). The tract at residues 669–700 (LAKADSSSSDSEDDSSHKRKKPITHADKPSEE) is disordered.

The protein belongs to the NCBP1 family. In terms of assembly, component of the nuclear cap-binding complex (CBC), a heterodimer composed of Cbp80 and Cbp20 that interacts with m7GpppG-capped RNA.

It localises to the nucleus. Functionally, component of the cap-binding complex (CBC), which binds cotranscriptionally to the 5'-cap of pre-mRNAs and is involved in various processes such as pre-mRNA splicing and RNA-mediated gene silencing (RNAi). The CBC complex is involved in miRNA-mediated RNA interference via its interaction with Ars2 and is required for primary microRNAs (miRNAs) processing. Also involved in innate immunity via the short interfering RNAs (siRNAs) processing machinery by restricting the viral RNA production. In the CBC complex, Cbp80 does not bind directly capped RNAs (m7GpppG-capped RNA) but is required to stabilize the movement of the N-terminal loop of Cbp20 and lock the CBC into a high affinity cap-binding state with the cap structure. The polypeptide is Nuclear cap-binding protein subunit 1 (Cbp80) (Drosophila yakuba (Fruit fly)).